A 69-amino-acid chain; its full sequence is Sodium channel toxin (69 aa).

Residues K2–N66 form the LCN-type CS-alpha/beta domain. Cystine bridges form between C14/C65, C18/C41, C27/C48, and C31/C50.

Belongs to the long (4 C-C) scorpion toxin superfamily. Sodium channel inhibitor family. In terms of tissue distribution, expressed by the venom gland.

It is found in the secreted. Functionally, inhibits voltage-gated sodium channels (Nav). The protein is Sodium channel toxin of Tityus metuendus (Scorpion).